A 169-amino-acid chain; its full sequence is Styrene-oxide isomerase (169 aa).

Transmembrane regions (helical) follow at residues 13-33 (GILMIFCTLLFGVGLWMHLVG), 61-81 (PALNGMMVIAVAFVLPSLGFA), 85-105 (PHLLGNIIILDGWANVGFYFF), and 129-149 (FLALAPAYLFGVLAMGALAVI).

It localises to the membrane. The catalysed reaction is styrene oxide = 2-phenylacetaldehyde. Its pathway is aromatic compound metabolism. Functionally, epoxystyrene isomerase that catalyzes the second step in the aerobic styrene degradation pathway by converting epoxystyrene to phenylacetaldehyde. The sequence is that of Styrene-oxide isomerase (styC) from Pseudomonas fluorescens.